We begin with the raw amino-acid sequence, 389 residues long: 1-acyl-sn-glycerol-3-phosphate acyltransferase 2 (389 aa).

The helical transmembrane segment at 2-22 (VIAAAVIVPLGLLFFISGLAV) threads the bilayer. Positions 91 to 96 (HRSDID) match the HXXXXD motif motif. 2 helical membrane-spanning segments follow: residues 305-325 (LAVV…FLHW) and 333-353 (KGIT…QILI). Positions 357–389 (QSERSTPAKVVPAKPKDNHHPESSSQTETEKEK) are disordered. The segment covering 370 to 389 (KPKDNHHPESSSQTETEKEK) has biased composition (basic and acidic residues).

Belongs to the 1-acyl-sn-glycerol-3-phosphate acyltransferase family. As to quaternary structure, interacts with GPAT9 and DGAT1. Present in roots, leaves, stems, floral buds and siliques (at protein level). Widely expressed. In contrast to LPAT1, it is not expressed at higher level in leaves.

The protein localises to the endoplasmic reticulum membrane. The catalysed reaction is a 1-acyl-sn-glycero-3-phosphate + an acyl-CoA = a 1,2-diacyl-sn-glycero-3-phosphate + CoA. It functions in the pathway phospholipid metabolism; CDP-diacylglycerol biosynthesis; CDP-diacylglycerol from sn-glycerol 3-phosphate: step 2/3. Converts lysophosphatidic acid (LPA) into phosphatidic acid by incorporating acyl moiety at the 2 position. Has preference for C-18-CoA substrates compared to C-16-CoA substrates. Required for female but not male gametophyte development. In Arabidopsis thaliana (Mouse-ear cress), this protein is 1-acyl-sn-glycerol-3-phosphate acyltransferase 2 (LPAT2).